The chain runs to 132 residues: Small ribosomal subunit protein uS8 (132 aa).

It belongs to the universal ribosomal protein uS8 family. Part of the 30S ribosomal subunit. Contacts proteins S5 and S12.

One of the primary rRNA binding proteins, it binds directly to 16S rRNA central domain where it helps coordinate assembly of the platform of the 30S subunit. The chain is Small ribosomal subunit protein uS8 from Streptococcus pyogenes serotype M49 (strain NZ131).